We begin with the raw amino-acid sequence, 43 residues long: Photosystem I reaction center subunit IX (43 aa).

The helical transmembrane segment at 7–27 (YLSVAPVLSTLWFGSLAGLLI) threads the bilayer.

This sequence belongs to the PsaJ family.

The protein resides in the plastid. Its subcellular location is the chloroplast thylakoid membrane. Its function is as follows. May help in the organization of the PsaE and PsaF subunits. In Aethionema cordifolium (Lebanon stonecress), this protein is Photosystem I reaction center subunit IX.